Consider the following 259-residue polypeptide: MTDLKASSLRALKLMDLTTLNDDDTDEKVIALCHQAKTPVGNTAAICIYPRFIPIARKTLKEQGTPEIRIATVTNFPHGNDDIEIALAETRAAIAYGADEVDVVFPYRALMAGNEQVGFDLVKACKEACAAANVLLKVIIETGELKDEALIRKASEISIKAGADFIKTSTGKVAVNATPESARIMMEVIRDMGVEKTVGFKPAGGVRTAEDAQKYLSIADELFGADWADARHYRFGASSLLASLLKALGHGDGKSASSY.

The Proton donor/acceptor role is filled by Asp102. The active-site Schiff-base intermediate with acetaldehyde is Lys167. Lys201 functions as the Proton donor/acceptor in the catalytic mechanism.

Belongs to the DeoC/FbaB aldolase family. DeoC type 2 subfamily.

Its subcellular location is the cytoplasm. It carries out the reaction 2-deoxy-D-ribose 5-phosphate = D-glyceraldehyde 3-phosphate + acetaldehyde. Its pathway is carbohydrate degradation; 2-deoxy-D-ribose 1-phosphate degradation; D-glyceraldehyde 3-phosphate and acetaldehyde from 2-deoxy-alpha-D-ribose 1-phosphate: step 2/2. Catalyzes a reversible aldol reaction between acetaldehyde and D-glyceraldehyde 3-phosphate to generate 2-deoxy-D-ribose 5-phosphate. The polypeptide is Deoxyribose-phosphate aldolase (Escherichia coli (strain SMS-3-5 / SECEC)).